We begin with the raw amino-acid sequence, 321 residues long: Oxidoreductase P35 (321 aa).

It belongs to the Gfo/Idh/MocA family.

The protein localises to the cell surface. Its function is as follows. Oxidoreductase that may be involved in ulvan degradation. Ulvan is the main polysaccharide component of the Ulvales (green seaweed) cell wall. It is composed of disaccharide building blocks comprising 3-sulfated rhamnose (Rha3S) linked to D-glucuronic acid (GlcA), L-iduronic acid (IduA), or D-xylose (Xyl). The sequence is that of Oxidoreductase P35 from Formosa agariphila (strain DSM 15362 / KCTC 12365 / LMG 23005 / KMM 3901 / M-2Alg 35-1).